A 427-amino-acid polypeptide reads, in one-letter code: Gamma-glutamyl phosphate reductase (427 aa).

This sequence belongs to the gamma-glutamyl phosphate reductase family.

It is found in the cytoplasm. The catalysed reaction is L-glutamate 5-semialdehyde + phosphate + NADP(+) = L-glutamyl 5-phosphate + NADPH + H(+). It functions in the pathway amino-acid biosynthesis; L-proline biosynthesis; L-glutamate 5-semialdehyde from L-glutamate: step 2/2. Catalyzes the NADPH-dependent reduction of L-glutamate 5-phosphate into L-glutamate 5-semialdehyde and phosphate. The product spontaneously undergoes cyclization to form 1-pyrroline-5-carboxylate. The sequence is that of Gamma-glutamyl phosphate reductase from Streptomyces griseus subsp. griseus (strain JCM 4626 / CBS 651.72 / NBRC 13350 / KCC S-0626 / ISP 5235).